The chain runs to 637 residues: Sec1 family domain-containing protein 1 (637 aa).

Phosphoserine occurs at positions 32, 298, and 523.

It belongs to the STXBP/unc-18/SEC1 family. As to quaternary structure, interacts with STX17. Interacts with the COG complex via COG4. Interacts with STX5A. In terms of tissue distribution, highly expressed in testis. Detected at lower levels in brain, astrocytes, heart and small intestine.

Its subcellular location is the cytoplasm. The protein localises to the endoplasmic reticulum membrane. The protein resides in the golgi apparatus. It is found in the golgi stack membrane. Plays a role in SNARE-pin assembly and Golgi-to-ER retrograde transport via its interaction with COG4. Involved in vesicular transport between the endoplasmic reticulum and the Golgi. This chain is Sec1 family domain-containing protein 1 (Scfd1), found in Rattus norvegicus (Rat).